Here is a 1435-residue protein sequence, read N- to C-terminus: Protein SPP41 (1435 aa).

Disordered regions lie at residues 16–74 (VGNL…NIEI), 88–265 (VANA…ENTL), 286–309 (AKQT…VEAQ), 322–424 (ELLS…DDEF), 442–482 (ETST…DSLD), 519–708 (SVSD…MKVP), and 934–972 (QQLD…AGHT). Residues 27–42 (GQEEGEVQGGEQEGDD) show a composition bias toward acidic residues. Basic and acidic residues-rich tracts occupy residues 53 to 63 (IEPKHPDDSQH), 98 to 127 (EQAK…KEQQ), and 139 to 154 (LKSD…ERRV). The UIM domain maps to 171-190 (QDDENLRMAILESLQELNTN). A compositionally biased stretch (basic and acidic residues) spans 196-205 (EPEKHEHAAP). Basic residues predominate over residues 211 to 223 (SKKSSKKKKKDKS). Residues 224 to 234 (KNRESSKDKSS) are compositionally biased toward basic and acidic residues. The span at 235–249 (KKSKSSSHSKKHAKD) shows a compositional bias: basic residues. Positions 286 to 301 (AKQTVDIQDNSHTDNT) are enriched in polar residues. Basic and acidic residues predominate over residues 345–355 (KAVEPPRKPTA). Basic residues predominate over residues 367–383 (KPKKRPPQEKKKTKSKT). A compositionally biased stretch (low complexity) spans 384–398 (SKAASTANKSPASES). Polar residues-rich tracts occupy residues 442–451 (ETSTHTATQD) and 459–482 (DFTS…DSLD). Basic and acidic residues-rich tracts occupy residues 524 to 548 (LPHD…EKKT), 610 to 628 (KNKE…AREE), and 637 to 652 (KQRL…KIVE). Positions 665–674 (KSGKPKKPYR) are enriched in basic residues. Over residues 676–691 (WTPEELLKRSQEAEKP) the composition is skewed to basic and acidic residues. The Nuclear localization signal motif lies at 683-699 (KRSQEAEKPRKVKKERK). A compositionally biased stretch (basic residues) spans 692-706 (RKVKKERKKKEKKMK). Lysine 981 participates in a covalent cross-link: Glycyl lysine isopeptide (Lys-Gly) (interchain with G-Cter in SUMO). Basic and acidic residues predominate over residues 1005 to 1014 (KLELTKRAES). The segment at 1005–1125 (KLELTKRAES…DSVNTTTGKP (121 aa)) is disordered. Position 1014 is a phosphoserine (serine 1014). Polar residues predominate over residues 1021-1032 (NVETAKETQSVQ). Composition is skewed to basic and acidic residues over residues 1033–1082 (EIKE…EKIA) and 1091–1103 (LSDK…KSTL). Residue serine 1067 is modified to Phosphoserine. Positions 1108-1123 (AQLTGNEPDSVNTTTG) are enriched in polar residues. Residue lysine 1154 forms a Glycyl lysine isopeptide (Lys-Gly) (interchain with G-Cter in SUMO) linkage.

Interacts with PRP8 and RAP1.

The protein resides in the nucleus. Its function is as follows. Negative regulator of PRP3 and PRP4 genes. This is Protein SPP41 (SPP41) from Saccharomyces cerevisiae (strain ATCC 204508 / S288c) (Baker's yeast).